Reading from the N-terminus, the 101-residue chain is MRKFETLLLLSPELAADAREALLGTLTGVVEREQGKMVAADHWGMRDLAYPVQKHMRGYYVRLEYLAPGEAVAEVERNIRISDGIFKFVTVKLADAVEEVA.

It belongs to the bacterial ribosomal protein bS6 family.

Its function is as follows. Binds together with bS18 to 16S ribosomal RNA. This chain is Small ribosomal subunit protein bS6, found in Nitratidesulfovibrio vulgaris (strain DSM 19637 / Miyazaki F) (Desulfovibrio vulgaris).